The sequence spans 666 residues: uncharacterized protein (666 aa).

It belongs to the MG032/MG096/MG288 family.

This is an uncharacterized protein from Mycoplasma genitalium (strain ATCC 33530 / DSM 19775 / NCTC 10195 / G37) (Mycoplasmoides genitalium).